We begin with the raw amino-acid sequence, 197 residues long: Probable nicotinate-nucleotide adenylyltransferase (197 aa).

The protein belongs to the NadD family.

It carries out the reaction nicotinate beta-D-ribonucleotide + ATP + H(+) = deamido-NAD(+) + diphosphate. It functions in the pathway cofactor biosynthesis; NAD(+) biosynthesis; deamido-NAD(+) from nicotinate D-ribonucleotide: step 1/1. Catalyzes the reversible adenylation of nicotinate mononucleotide (NaMN) to nicotinic acid adenine dinucleotide (NaAD). The chain is Probable nicotinate-nucleotide adenylyltransferase from Bordetella avium (strain 197N).